The sequence spans 91 residues: Islet amyloid polypeptide (91 aa).

Residues 1–22 form the signal peptide; it reads MGILKLPVVLIVLCVALNHLEG. Positions 23–33 are excised as a propeptide; the sequence is GGKPTESHQME. A disulfide bond links Cys-37 and Cys-42. A Tyrosine amide modification is found at Tyr-72. Positions 78 to 91 are excised as a propeptide; that stretch reads VEILKREPLSYLPI.

This sequence belongs to the calcitonin family. Can form homodimers. Interacts with IDE and INS. Interaction with INS inhibits homodimerization and fibril formation.

The protein resides in the secreted. In terms of biological role, amylin/IAPP is a glucoregulatory peptide hormone that plays an important role in the regulation of energy homeostasis. Selectively inhibits insulin-stimulated glucose utilization and glycogen deposition in muscle, while not affecting adipocyte glucose metabolism. IAPP function is mediated by the CALCR-RAMPs (AMYRs) receptor complexes. Amylin can also bind CALCR receptor in the absence of RAMPs, although it is more selective for AMYRs. In Bos taurus (Bovine), this protein is Islet amyloid polypeptide (IAPP).